A 98-amino-acid polypeptide reads, in one-letter code: NADH-ubiquinone oxidoreductase chain 4L (98 aa).

The next 3 membrane-spanning stretches (helical) occupy residues 1-21 (MTST…GILI), 29-49 (ILLC…VWAI), and 61-81 (LILL…MVAL).

This sequence belongs to the complex I subunit 4L family.

It is found in the mitochondrion membrane. It catalyses the reaction a ubiquinone + NADH + 5 H(+)(in) = a ubiquinol + NAD(+) + 4 H(+)(out). Its function is as follows. Core subunit of the mitochondrial membrane respiratory chain NADH dehydrogenase (Complex I) that is believed to belong to the minimal assembly required for catalysis. Complex I functions in the transfer of electrons from NADH to the respiratory chain. The immediate electron acceptor for the enzyme is believed to be ubiquinone. In Patiria pectinifera (Starfish), this protein is NADH-ubiquinone oxidoreductase chain 4L (ND4L).